The chain runs to 859 residues: DNA mismatch repair protein MutS (859 aa).

622–629 (GPNMGGKS) contributes to the ATP binding site.

Belongs to the DNA mismatch repair MutS family.

Functionally, this protein is involved in the repair of mismatches in DNA. It is possible that it carries out the mismatch recognition step. This protein has a weak ATPase activity. The protein is DNA mismatch repair protein MutS of Coxiella burnetii (strain RSA 493 / Nine Mile phase I).